A 157-amino-acid polypeptide reads, in one-letter code: UPF0262 protein amb3341 (157 aa).

It belongs to the UPF0262 family.

The chain is UPF0262 protein amb3341 from Paramagnetospirillum magneticum (strain ATCC 700264 / AMB-1) (Magnetospirillum magneticum).